Here is a 226-residue protein sequence, read N- to C-terminus: UPF0758 protein PputW619_0186 (226 aa).

One can recognise an MPN domain in the interval 102 to 224; that stretch reads ALESPSAVRR…PLSMVEQGWI (123 aa). Zn(2+) contacts are provided by histidine 173, histidine 175, and aspartate 186. The short motif at 173–186 is the JAMM motif element; sequence HNHPSGNSEPSQDD.

Belongs to the UPF0758 family.

In Pseudomonas putida (strain W619), this protein is UPF0758 protein PputW619_0186.